Consider the following 108-residue polypeptide: Trissin (108 aa).

A signal peptide spans 1-29; it reads MTKTTMHWLAHFQIILLCIWLMCPPSSQA. 3 cysteine pairs are disulfide-bonded: C32–C43, C35–C52, and C39–C51. Residues 57–108 constitute a propeptide that is removed on maturation; the sequence is RKRSDPDALRQSSNRRLIDFILLQGRALFTQELRERRHNGTLMDLGLNTYYP.

It localises to the secreted. In terms of biological role, activates the G-protein coupled receptor TrissinR in vitro, leading to increased intracellular calcium ion levels. This chain is Trissin, found in Drosophila melanogaster (Fruit fly).